The sequence spans 359 residues: Protein mab-21-like 2-B (359 aa).

The protein belongs to the mab-21 family.

It is found in the nucleus. The protein resides in the cytoplasm. Its function is as follows. Required for several aspects of embryonic development including normal development of the eye. The protein is Protein mab-21-like 2-B (mab21l2-b) of Xenopus laevis (African clawed frog).